Here is a 134-residue protein sequence, read N- to C-terminus: SNAPIN protein homolog (134 aa).

Residues 50–124 (QLQAELRGQL…EKEQRRRQAL (75 aa)) adopt a coiled-coil conformation.

The protein belongs to the SNAPIN family. Component of the biogenesis of lysosome-related organelles complex-1 (BLOC-1) composed of Blos1, Blos2, Blos3, Blos4, Dysb, Muted, Pldn and Snapin. Interacts with Blos2 and Dysb.

It is found in the membrane. The protein localises to the cytoplasm. The protein resides in the cytosol. Its function is as follows. Component of the biogenesis of lysosome-related organelles complex-1 (BLOC-1) involved in pigment granule biogenesis. May participate in the coupling of lysosomes to microtubule plus-end-directed kinesin motor. This Drosophila melanogaster (Fruit fly) protein is SNAPIN protein homolog.